The sequence spans 485 residues: Probable coniferyl aldehyde dehydrogenase (485 aa).

Catalysis depends on residues E226 and C260.

This sequence belongs to the aldehyde dehydrogenase family.

It catalyses the reaction (E)-coniferaldehyde + NADP(+) + H2O = (E)-ferulate + NADPH + 2 H(+). The catalysed reaction is (E)-coniferaldehyde + NAD(+) + H2O = (E)-ferulate + NADH + 2 H(+). The polypeptide is Probable coniferyl aldehyde dehydrogenase (calB) (Caulobacter vibrioides (strain ATCC 19089 / CIP 103742 / CB 15) (Caulobacter crescentus)).